The sequence spans 251 residues: Flap endonuclease Xni (251 aa).

Residue D104 participates in Mg(2+) binding. A 5'-3' exonuclease domain is found at 160–250 (VLPRQLPDYW…SGNLQQLRLK (91 aa)). The K(+) site is built by L171, A172, P180, V182, and V185. The interaction with DNA stretch occupies residues 184 to 189 (GVGAKT).

The protein belongs to the Xni family. It depends on Mg(2+) as a cofactor. K(+) is required as a cofactor.

Has flap endonuclease activity. During DNA replication, flap endonucleases cleave the 5'-overhanging flap structure that is generated by displacement synthesis when DNA polymerase encounters the 5'-end of a downstream Okazaki fragment. The chain is Flap endonuclease Xni from Yersinia pestis bv. Antiqua (strain Nepal516).